Here is a 274-residue protein sequence, read N- to C-terminus: Thiamine kinase (274 aa).

The protein belongs to the thiamine kinase family.

The enzyme catalyses thiamine + ATP = thiamine phosphate + ADP + H(+). The protein operates within cofactor biosynthesis; thiamine diphosphate biosynthesis; thiamine phosphate from thiamine: step 1/1. Catalyzes the ATP-dependent phosphorylation of thiamine to thiamine phosphate. Is involved in thiamine salvage. This is Thiamine kinase from Salmonella typhi.